Consider the following 574-residue polypeptide: Envelope glycoprotein (574 aa).

A signal peptide spans 1–22 (MTVKDIPFWRVLLIFQTARVYA). The Extracellular portion of the chain corresponds to 23-514 (GFGDPREAIT…TGLHGLLPYL (492 aa)). Residues N117 and N233 are each glycosylated (N-linked (GlcNAc...) asparagine; by host). Positions 243-246 (CWLC) match the CXXC motif. 3 disulfide bridges follow: C243–C246, C243–C471, and C463–C470. Residues N260, N267, N288, N298, N312, N318, N327, and N345 are each glycosylated (N-linked (GlcNAc...) asparagine; by host). The tract at residues 386 to 406 (FIPLLVGLGITTAVSTGTTGL) is fusion peptide. 2 coiled-coil regions span residues 407–457 (GYSI…LFTA) and 467–503 (QEKC…DNPF). Residues 446–462 (LQNRRGLDLFTAEQGGI) form an immunosuppression region. The CX6CC motif lies at 463-471 (CLALQEKCC). A glycan (N-linked (GlcNAc...) asparagine; by host) is linked at N475. The helical transmembrane segment at 515 to 535 (LPLLRPLLCLLLLITFGPLIF) threads the bilayer. The Cytoplasmic segment spans residues 536 to 574 (NKIIAFVKQQMDAIQAKPIQVHYHRLEQEDNGGVYLRVS). The YXXL motif; contains endocytosis signal signature appears at 558 to 561 (YHRL).

The mature envelope protein (Env) consists of a trimer of SU-TM heterodimers attached by a labile interchain disulfide bond. In terms of processing, specific enzymatic cleavages in vivo yield mature proteins. Envelope glycoproteins are synthesized as an inactive precursor that is N-glycosylated and processed likely by host cell furin or by a furin-like protease in the Golgi to yield the mature SU and TM proteins. The cleavage site between SU and TM requires the minimal sequence [KR]-X-[KR]-R. The R-peptide is released from the C-terminus of the cytoplasmic tail of the TM protein upon particle formation as a result of proteolytic cleavage by the viral protease. Cleavage of this peptide is required for TM to become fusogenic. Post-translationally, the CXXC motif is highly conserved across a broad range of retroviral envelope proteins. It is thought to participate in the formation of a labile disulfide bond possibly with the CX6CC motif present in the transmembrane protein. Isomerization of the intersubunit disulfide bond to an SU intrachain disulfide bond is thought to occur upon receptor recognition in order to allow membrane fusion.

The protein resides in the virion membrane. Its subcellular location is the host cell membrane. In terms of biological role, the surface protein (SU) attaches the virus to the host cell by binding to its receptor. This interaction triggers the refolding of the transmembrane protein (TM) and is thought to activate its fusogenic potential by unmasking its fusion peptide. Fusion occurs at the host cell plasma membrane. Its function is as follows. The transmembrane protein (TM) acts as a class I viral fusion protein. Under the current model, the protein has at least 3 conformational states: pre-fusion native state, pre-hairpin intermediate state, and post-fusion hairpin state. During viral and target cell membrane fusion, the coiled coil regions (heptad repeats) assume a trimer-of-hairpins structure, positioning the fusion peptide in close proximity to the C-terminal region of the ectodomain. The formation of this structure appears to drive apposition and subsequent fusion of viral and target cell membranes. Membranes fusion leads to delivery of the nucleocapsid into the cytoplasm. The polypeptide is Envelope glycoprotein (env) (Macaca mulatta (Rhesus macaque)).